We begin with the raw amino-acid sequence, 272 residues long: Large ribosomal subunit protein uL2 (272 aa).

Residues 247–272 (PWGQPCKGFKTRNNKRTNSSIIKRRK) form a disordered region. Over residues 262–272 (RTNSSIIKRRK) the composition is skewed to polar residues.

Belongs to the universal ribosomal protein uL2 family. Part of the 50S ribosomal subunit. Forms a bridge to the 30S subunit in the 70S ribosome.

Its function is as follows. One of the primary rRNA binding proteins. Required for association of the 30S and 50S subunits to form the 70S ribosome, for tRNA binding and peptide bond formation. It has been suggested to have peptidyltransferase activity; this is somewhat controversial. Makes several contacts with the 16S rRNA in the 70S ribosome. This chain is Large ribosomal subunit protein uL2, found in Bdellovibrio bacteriovorus (strain ATCC 15356 / DSM 50701 / NCIMB 9529 / HD100).